The chain runs to 396 residues: L-lactate dehydrogenase (396 aa).

Positions 1–380 (MIISAASDYR…TQDSLVQGLG (380 aa)) constitute an FMN hydroxy acid dehydrogenase domain. Tyr24 is a binding site for substrate. Residues Ser106 and Gln127 each contribute to the FMN site. Position 129 (Tyr129) interacts with substrate. Residue Thr155 coordinates FMN. Arg164 provides a ligand contact to substrate. Residue Lys251 coordinates FMN. The active-site Proton acceptor is the His275. Arg278 serves as a coordination point for substrate. Residue 306–330 (DSGIRNGLDVVRMIALGADTVLLGR) participates in FMN binding.

It belongs to the FMN-dependent alpha-hydroxy acid dehydrogenase family. Requires FMN as cofactor.

It is found in the cell inner membrane. It carries out the reaction (S)-lactate + A = pyruvate + AH2. In terms of biological role, catalyzes the conversion of L-lactate to pyruvate. Is coupled to the respiratory chain. The protein is L-lactate dehydrogenase of Shigella dysenteriae serotype 1 (strain Sd197).